Here is a 62-residue protein sequence, read N- to C-terminus: [Ser6, Val10, Asp11]-phyllokinin (62 aa).

The signal sequence occupies residues 1 to 22 (MSFLKKSLLLVLFLGLVSFSIC). Residues 23 to 51 (EEEKRETEEEENEDDMDEESEEKKRESPD) constitute a propeptide that is removed on maturation. The interval 24 to 62 (EEKRETEEEENEDDMDEESEEKKRESPDRPPGFSPFRVD) is disordered. A compositionally biased stretch (acidic residues) spans 30 to 42 (EEEENEDDMDEES).

It belongs to the frog skin active peptide (FSAP) family. Bradykinin-related peptide subfamily. Expressed by the skin glands.

Its subcellular location is the secreted. Its function is as follows. Induces relaxation of rat smooth muscle from tail artery and contraction of that from ileum, urinary bladder and uterus. Binds to both bradykinin receptor B1 (BDKRB1) and B2 (BDKRB2). The chain is [Ser6, Val10, Asp11]-phyllokinin from Agalychnis spurrelli (Gliding leaf frog).